Here is a 153-residue protein sequence, read N- to C-terminus: uncharacterized protein (153 aa).

The tract at residues 17 to 78 is disordered; the sequence is IYIHTPHPHP…HTTLSNLSLN (62 aa). Residues 22-38 are compositionally biased toward basic residues; the sequence is PHPHPHPHPHTPTHTHP.

This is an uncharacterized protein from Saccharomyces cerevisiae (strain ATCC 204508 / S288c) (Baker's yeast).